A 475-amino-acid polypeptide reads, in one-letter code: Doublecortin domain-containing protein 2 (475 aa).

2 consecutive Doublecortin domains span residues 17–100 and 139–221; these read KSVL…LNYL and CTIF…LPYS. A disordered region spans residues 234 to 475; that stretch reads YGQKASSLPP…EANKASSAVA (242 aa). The span at 252-272 shows a compositional bias: polar residues; it reads GSGNYRQSKSTIGSSDNSSPQ. Serine 270 carries the post-translational modification Phosphoserine. Over residues 353-365 the composition is skewed to basic and acidic residues; the sequence is EKTSKDANQKEDF. Residues 407 to 425 are compositionally biased toward acidic residues; it reads TDEENGEELDQVAEELQPT.

In terms of assembly, interacts with DVL1, DVL2 and DVL3. In terms of tissue distribution, expressed in hair cells of the inner ear.

It is found in the cell projection. Its subcellular location is the cilium. The protein resides in the cytoplasm. It localises to the cytoskeleton. The protein localises to the cilium axoneme. It is found in the kinocilium. Functionally, protein that plays a role in the inhibition of canonical Wnt signaling pathway. May be involved in neuronal migration during development of the cerebral neocortex. Involved in the control of ciliogenesis and ciliary length. This chain is Doublecortin domain-containing protein 2 (Dcdc2), found in Mus musculus (Mouse).